The chain runs to 74 residues: ATP synthase subunit 9, mitochondrial (74 aa).

2 helical membrane passes run glycine 16–alanine 36 and isoleucine 50–leucine 70.

The protein belongs to the ATPase C chain family. As to quaternary structure, F-type ATPases have 2 components, CF(1) - the catalytic core - and CF(0) - the membrane proton channel. CF(1) has five subunits: alpha(3), beta(3), gamma(1), delta(1), epsilon(1). CF(0) has three main subunits: a, b and c.

The protein resides in the mitochondrion membrane. Its function is as follows. Mitochondrial membrane ATP synthase (F(1)F(0) ATP synthase or Complex V) produces ATP from ADP in the presence of a proton gradient across the membrane which is generated by electron transport complexes of the respiratory chain. F-type ATPases consist of two structural domains, F(1) - containing the extramembraneous catalytic core and F(0) - containing the membrane proton channel, linked together by a central stalk and a peripheral stalk. During catalysis, ATP synthesis in the catalytic domain of F(1) is coupled via a rotary mechanism of the central stalk subunits to proton translocation. Part of the complex F(0) domain. A homomeric c-ring of probably 10 subunits is part of the complex rotary element. The protein is ATP synthase subunit 9, mitochondrial (ATP9) of Trichophyton rubrum (Athlete's foot fungus).